The primary structure comprises 194 residues: Fe/S biogenesis protein NfuA (194 aa).

Positions 151 and 154 each coordinate [4Fe-4S] cluster.

This sequence belongs to the NfuA family. In terms of assembly, homodimer. Requires [4Fe-4S] cluster as cofactor.

Involved in iron-sulfur cluster biogenesis. Binds a 4Fe-4S cluster, can transfer this cluster to apoproteins, and thereby intervenes in the maturation of Fe/S proteins. Could also act as a scaffold/chaperone for damaged Fe/S proteins. This Pasteurella multocida (strain Pm70) protein is Fe/S biogenesis protein NfuA.